Here is a 32-residue protein sequence, read N- to C-terminus: Dermatoxin-J3 (32 aa).

Position 32 is a glutamine amide (Q32).

In terms of tissue distribution, expressed by the skin glands.

It localises to the secreted. Its function is as follows. Antimicrobial peptide. This is Dermatoxin-J3 from Phasmahyla jandaia (Jandaia leaf frog).